The following is a 147-amino-acid chain: Basic phospholipase A2 beta-bungarotoxin A4 chain (147 aa).

Positions methionine 1 to alanine 19 are cleaved as a signal peptide. Residues alanine 20 to leucine 27 constitute a propeptide that is removed on maturation. Cystine bridges form between cysteine 54–cysteine 146, cysteine 56–cysteine 72, cysteine 71–cysteine 127, cysteine 78–cysteine 120, cysteine 88–cysteine 113, and cysteine 106–cysteine 118. Ca(2+)-binding residues include tyrosine 55, glycine 57, and glycine 59. Residue histidine 75 is part of the active site. A Ca(2+)-binding site is contributed by aspartate 76. Residue aspartate 121 is part of the active site.

The protein belongs to the phospholipase A2 family. Group I subfamily. D49 sub-subfamily. Heterodimer; disulfide-linked. The A chain has phospholipase A2 activity and the B chain shows homology with the basic protease inhibitors. It depends on Ca(2+) as a cofactor. Expressed by the venom gland.

Its subcellular location is the secreted. The catalysed reaction is a 1,2-diacyl-sn-glycero-3-phosphocholine + H2O = a 1-acyl-sn-glycero-3-phosphocholine + a fatty acid + H(+). In terms of biological role, snake venom phospholipase A2 (PLA2) that shows presynaptic neurotoxicity. The A chain has phospholipase activity. PLA2 catalyzes the calcium-dependent hydrolysis of the 2-acyl groups in 3-sn-phosphoglycerides. This Bungarus candidus (Malayan krait) protein is Basic phospholipase A2 beta-bungarotoxin A4 chain.